The chain runs to 207 residues: uncharacterized protein (207 aa).

This is an uncharacterized protein from Rhizobium meliloti (Ensifer meliloti).